A 122-amino-acid polypeptide reads, in one-letter code: Biogenesis of lysosome-related organelles complex 1 subunit CNL1 (122 aa).

Positions 1–10 are enriched in basic and acidic residues; that stretch reads MQDNSSHSRE. The interval 1–21 is disordered; it reads MQDNSSHSRESASAGDDPLGI. Residues 63-95 adopt a coiled-coil conformation; the sequence is ENTIDKNIAKFKELLEKCDTLENHYEMLNQLAI.

The protein belongs to the BLOC1S4 family. As to quaternary structure, component of the biogenesis of lysosome-related organelles complex-1 (BLOC-1) composed of at least BLI1, BLS1, CNL1, KXD1, SNN1 and VAB2.

It localises to the cytoplasm. Its function is as follows. Component of the biogenesis of lysosome-related organelles complex-1 (BLOC-1), a complex that is involved in endosomal cargo sorting. This Saccharomyces cerevisiae (strain Lalvin QA23) (Baker's yeast) protein is Biogenesis of lysosome-related organelles complex 1 subunit CNL1 (CLN1).